Consider the following 653-residue polypeptide: Probable sulfate transporter 3.4 (653 aa).

Residues 1 to 92 (MGHGTNRVED…QYDLKLLRSD (92 aa)) lie on the Cytoplasmic side of the membrane. The chain crosses the membrane as a helical span at residues 93 to 113 (VISGLTIASLAIPQGISYAKL). Residues 114 to 115 (AN) lie on the Extracellular side of the membrane. A helical membrane pass occupies residues 116–136 (LPPIVGLYSSFVPPLIYAVLG). Over 137–140 (SSRH) the chain is Cytoplasmic. A helical transmembrane segment spans residues 141–161 (LAVGPVSIASLVMGSMLSESV). Over 162–167 (SPTQDS) the chain is Extracellular. A helical membrane pass occupies residues 168–188 (ILYLKLAFTSTFFAGVFQASL). At 189–194 (GLLRLG) the chain is on the cytoplasmic side. A helical membrane pass occupies residues 195–215 (FMIDFLSKATLIGFTAGAAVI). Topologically, residues 216–247 (VSLQQLKGLLGIVHFTGKMQIVPVMSSVFNHR) are extracellular. Residues 248–268 (SEWSWETIVMGIGFLSILLTT) form a helical membrane-spanning segment. Residues 269-279 (RHISMRKPKLF) are Cytoplasmic-facing. A helical membrane pass occupies residues 280-300 (WISAASPLASVIISTLLVYLI). Residues 301-331 (RSKTHAISFIGHLPKGLNPPSLNMLYFSGAH) are Extracellular-facing. The helical transmembrane segment at 332-352 (LALAIKTGIITGILSLTEGIA) threads the bilayer. The Cytoplasmic segment spans residues 353–370 (VGRTFASLKNYQVNGNKE). A helical membrane pass occupies residues 371–391 (MMAIGFMNMAGSCTSCYVTTG). At 392 to 407 (SFSRSAVNYNAGAKTA) the chain is on the extracellular side. A helical membrane pass occupies residues 408-428 (VSNIVMASAVLVTLLFLMPLF). At 429-433 (YYTPN) the chain is on the cytoplasmic side. Residues 434–454 (VILAAIILTAVIGLIDYQAAY) form a helical membrane-spanning segment. The Extracellular segment spans residues 455–471 (KLWKVDKFDFFTCLCSF). Residues 472–492 (FGVLFVSVPLGLAIAVAVSVI) form a helical membrane-spanning segment. At 493–653 (KILLHVTRPN…SSTWKANGQP (161 aa)) the chain is on the cytoplasmic side. An STAS domain is found at 520 to 643 (RYREASRIPG…LTVGEAVADL (124 aa)).

Belongs to the SLC26A/SulP transporter (TC 2.A.53) family.

It is found in the membrane. Functionally, h(+)/sulfate cotransporter that may play a role in the regulation of sulfate assimilation. The protein is Probable sulfate transporter 3.4 (SULTR3;4) of Arabidopsis thaliana (Mouse-ear cress).